A 230-amino-acid chain; its full sequence is Cytochrome c oxidase subunit 2 (230 aa).

Over 1-14 (MAHPTQLGFQDAAS) the chain is Mitochondrial intermembrane. Residues 15 to 45 (PVMEELLHFHDHALMIVFLISTLVLYIIIAM) form a helical membrane-spanning segment. Residues 46 to 59 (VSTKLTNKYILDSQ) lie on the Mitochondrial matrix side of the membrane. The chain crosses the membrane as a helical span at residues 60–87 (EIEIVWTILPAVILVLIALPSLRILYLM). The Mitochondrial intermembrane portion of the chain corresponds to 88–230 (DEINDPHLTI…NWSSLMLEDA (143 aa)). The Cu cation site is built by H161, C196, E198, C200, H204, and M207. Residue E198 coordinates Mg(2+).

Belongs to the cytochrome c oxidase subunit 2 family. Component of the cytochrome c oxidase (complex IV, CIV), a multisubunit enzyme composed of 14 subunits. The complex is composed of a catalytic core of 3 subunits MT-CO1, MT-CO2 and MT-CO3, encoded in the mitochondrial DNA, and 11 supernumerary subunits COX4I, COX5A, COX5B, COX6A, COX6B, COX6C, COX7A, COX7B, COX7C, COX8 and NDUFA4, which are encoded in the nuclear genome. The complex exists as a monomer or a dimer and forms supercomplexes (SCs) in the inner mitochondrial membrane with NADH-ubiquinone oxidoreductase (complex I, CI) and ubiquinol-cytochrome c oxidoreductase (cytochrome b-c1 complex, complex III, CIII), resulting in different assemblies (supercomplex SCI(1)III(2)IV(1) and megacomplex MCI(2)III(2)IV(2)). Found in a complex with TMEM177, COA6, COX18, COX20, SCO1 and SCO2. Interacts with TMEM177 in a COX20-dependent manner. Interacts with COX20. Interacts with COX16. The cofactor is Cu cation.

The protein localises to the mitochondrion inner membrane. The enzyme catalyses 4 Fe(II)-[cytochrome c] + O2 + 8 H(+)(in) = 4 Fe(III)-[cytochrome c] + 2 H2O + 4 H(+)(out). In terms of biological role, component of the cytochrome c oxidase, the last enzyme in the mitochondrial electron transport chain which drives oxidative phosphorylation. The respiratory chain contains 3 multisubunit complexes succinate dehydrogenase (complex II, CII), ubiquinol-cytochrome c oxidoreductase (cytochrome b-c1 complex, complex III, CIII) and cytochrome c oxidase (complex IV, CIV), that cooperate to transfer electrons derived from NADH and succinate to molecular oxygen, creating an electrochemical gradient over the inner membrane that drives transmembrane transport and the ATP synthase. Cytochrome c oxidase is the component of the respiratory chain that catalyzes the reduction of oxygen to water. Electrons originating from reduced cytochrome c in the intermembrane space (IMS) are transferred via the dinuclear copper A center (CU(A)) of subunit 2 and heme A of subunit 1 to the active site in subunit 1, a binuclear center (BNC) formed by heme A3 and copper B (CU(B)). The BNC reduces molecular oxygen to 2 water molecules using 4 electrons from cytochrome c in the IMS and 4 protons from the mitochondrial matrix. This Carassius auratus (Goldfish) protein is Cytochrome c oxidase subunit 2 (mt-co2).